Here is a 364-residue protein sequence, read N- to C-terminus: Coproporphyrin III ferrochelatase (364 aa).

Fe-coproporphyrin III is bound by residues Arg29 and Tyr118. Residues His169 and Glu250 each contribute to the Fe(2+) site.

It belongs to the ferrochelatase family.

It is found in the cytoplasm. The catalysed reaction is Fe-coproporphyrin III + 2 H(+) = coproporphyrin III + Fe(2+). It functions in the pathway porphyrin-containing compound metabolism; protoheme biosynthesis. In terms of biological role, involved in coproporphyrin-dependent heme b biosynthesis. Catalyzes the insertion of ferrous iron into coproporphyrin III to form Fe-coproporphyrin III. In Streptococcus pneumoniae serotype 2 (strain D39 / NCTC 7466), this protein is Coproporphyrin III ferrochelatase.